The primary structure comprises 125 residues: C-X-C motif chemokine 9 (125 aa).

Residues 1 to 21 form the signal peptide; it reads MKKSAPLFLGIIFLTLTGVQG. 2 disulfides stabilise this stretch: C30-C57 and C32-C73. Residues 91–125 are disordered; the sequence is QVNQKKKQRKGKKYKKTKKVPKVKRSQRPSQKKTT. Residues 93–125 are compositionally biased toward basic residues; it reads NQKKKQRKGKKYKKTKKVPKVKRSQRPSQKKTT.

Belongs to the intercrine alpha (chemokine CxC) family.

It localises to the secreted. In terms of biological role, cytokine that affects the growth, movement, or activation state of cells that participate in immune and inflammatory response. Chemotactic for activated T-cells. Binds to CXCR3. The polypeptide is C-X-C motif chemokine 9 (CXCL9) (Bos taurus (Bovine)).